We begin with the raw amino-acid sequence, 205 residues long: Small ribosomal subunit protein uS4 (205 aa).

Residues 1–16 are compositionally biased toward basic and acidic residues; that stretch reads MSKRESSKYKIDRRMG. A disordered region spans residues 1–46; the sequence is MSKRESSKYKIDRRMGENIWGRPKSPVNRREYGPGQHGQRRKSKLS. An S4 RNA-binding domain is found at 94–157; the sequence is SRLDAIVYRA…KQLVTVLEAV (64 aa).

The protein belongs to the universal ribosomal protein uS4 family. Part of the 30S ribosomal subunit. Contacts protein S5. The interaction surface between S4 and S5 is involved in control of translational fidelity.

Functionally, one of the primary rRNA binding proteins, it binds directly to 16S rRNA where it nucleates assembly of the body of the 30S subunit. In terms of biological role, with S5 and S12 plays an important role in translational accuracy. This is Small ribosomal subunit protein uS4 from Sinorhizobium medicae (strain WSM419) (Ensifer medicae).